Reading from the N-terminus, the 383-residue chain is Protein COS5 (383 aa).

Residues 1–42 (MKENELKNEKSVDVLSFKQLESQKIVLPQDLFRSSFTWFCYE) are Cytoplasmic-facing. A helical membrane pass occupies residues 43-63 (IYKSLAFPIWMLLWLPLSVWW). The Extracellular segment spans residues 64–72 (KLSNNCIYP). Residues 73–93 (LIVSLLVLFLGPIFVLVICGL) form a helical membrane-spanning segment. Over 94-232 (SRKRSLSKQL…RSKLTWFLKR (139 aa)) the chain is Cytoplasmic. A helical membrane pass occupies residues 233–253 (IFTIYSLPLWLAFLNCICVSQ). A topological domain (extracellular) is located at residue histidine 254. A helical membrane pass occupies residues 255–275 (FCLAFRILCPGLFFLMMVWLF). The Cytoplasmic segment spans residues 276 to 383 (QNMRTTALLV…SRNEESLMKK (108 aa)).

The protein belongs to the DUP/COS family.

Its subcellular location is the membrane. This chain is Protein COS5 (COS5), found in Saccharomyces cerevisiae (strain ATCC 204508 / S288c) (Baker's yeast).